The primary structure comprises 83 residues: Apolipoprotein C-I, acidic form (83 aa).

A signal peptide spans 1 to 26; that stretch reads MRLFLSLPVLVVVLSMVLEGPAPAQG.

The protein belongs to the apolipoprotein C1 family.

It is found in the secreted. This Pan troglodytes (Chimpanzee) protein is Apolipoprotein C-I, acidic form (APOC1A).